A 686-amino-acid chain; its full sequence is Ovotransferrin (686 aa).

2 consecutive Transferrin-like domains span residues 7–333 and 345–670; these read VRWC…SLRK and IQWC…SLNT. Disulfide bonds link cysteine 10/cysteine 45, cysteine 20/cysteine 36, cysteine 115/cysteine 197, cysteine 160/cysteine 174, cysteine 171/cysteine 182, and cysteine 228/cysteine 242. The connecting region stretch occupies residues 333-341; it reads KDQLTVGPR. 9 disulfides stabilise this stretch: cysteine 348–cysteine 380, cysteine 358–cysteine 371, cysteine 405–cysteine 680, cysteine 421–cysteine 643, cysteine 454–cysteine 530, cysteine 478–cysteine 671, cysteine 488–cysteine 502, cysteine 499–cysteine 513, and cysteine 570–cysteine 584. Residue asparagine 473 is glycosylated (N-linked (GlcNAc...) asparagine). Asparagine 548 carries an N-linked (GlcNAc...) asparagine glycan.

It belongs to the transferrin family. As to quaternary structure, monomer.

Its subcellular location is the secreted. Functionally, transferrins are iron binding transport proteins which can bind two Fe(3+) ions in association with the binding of an anion, usually bicarbonate. It is responsible for the transport of iron from sites of absorption and heme degradation to those of storage and utilization. Serum transferrin may also have a further role in stimulating cell proliferation. Its function is as follows. Ovotransferrin has a bacteriostatic function. Its concentration in avian egg is the highest concentration of any transferrin in vivo. The polypeptide is Ovotransferrin (Anas platyrhynchos (Mallard)).